We begin with the raw amino-acid sequence, 61 residues long: MARKSLCVKAQRTPKFKVRTYNRCPLCGRPRGYMRKFGICRICFRNMASEGLLPGVIKSSW.

Zn(2+) is bound by residues Cys24, Cys27, Cys40, and Cys43.

Belongs to the universal ribosomal protein uS14 family. Zinc-binding uS14 subfamily. As to quaternary structure, part of the 30S ribosomal subunit. Contacts proteins S3 and S10. The cofactor is Zn(2+).

Binds 16S rRNA, required for the assembly of 30S particles and may also be responsible for determining the conformation of the 16S rRNA at the A site. The chain is Small ribosomal subunit protein uS14 from Desulfatibacillum aliphaticivorans.